The following is a 61-amino-acid chain: Large ribosomal subunit protein uL30 (61 aa).

The protein belongs to the universal ribosomal protein uL30 family. As to quaternary structure, part of the 50S ribosomal subunit.

The sequence is that of Large ribosomal subunit protein uL30 from Corynebacterium diphtheriae (strain ATCC 700971 / NCTC 13129 / Biotype gravis).